The primary structure comprises 166 residues: Bacterial non-heme ferritin (166 aa).

Residues 2–145 (LSKDLLEALN…THIDYLNRIG (144 aa)) enclose the Ferritin-like diiron domain. 5 residues coordinate Fe cation: glutamate 17, glutamate 50, histidine 53, glutamate 94, and glutamine 127.

This sequence belongs to the ferritin family. Prokaryotic subfamily.

It localises to the cytoplasm. The enzyme catalyses 4 Fe(2+) + O2 + 6 H2O = 4 iron(III) oxide-hydroxide + 12 H(+). Iron-storage protein. The sequence is that of Bacterial non-heme ferritin (ftnA) from Staphylococcus haemolyticus (strain JCSC1435).